Reading from the N-terminus, the 249-residue chain is Small ribosomal subunit protein eS6 (249 aa).

K14 participates in a covalent cross-link: Glycyl lysine isopeptide (Lys-Gly) (interchain with G-Cter in SUMO2). At E35 the chain carries ADP-ribosyl glutamic acid. Position 137 is a (3R)-3-hydroxyarginine (R137). Phosphoserine is present on S148. At K211 the chain carries N6-acetyllysine. Basic and acidic residues predominate over residues 217–229; it reads MKEAKEKRQEQIA. The tract at residues 217–249 is disordered; that stretch reads MKEAKEKRQEQIAKRRRLSSLRASTSKSESSQK. Phosphoserine; by RPS6KA1, RPS6KA3, DAPK1 and PASK occurs at positions 235 and 236. Residues 236 to 249 show a composition bias toward low complexity; it reads SLRASTSKSESSQK. Phosphoserine is present on residues S240, S242, S244, and S247.

This sequence belongs to the eukaryotic ribosomal protein eS6 family. Component of the small ribosomal subunit. Part of the small subunit (SSU) processome, composed of more than 70 proteins and the RNA chaperone small nucleolar RNA (snoRNA) U3. Ribosomal protein S6 is the major substrate of protein kinases in eukaryote ribosomes. The phosphorylation is stimulated by growth factors, tumor promoting agents, and mitogens. It is dephosphorylated at growth arrest. Phosphorylated at Ser-235 and Ser-236 by RPS6KA1 and RPS6KA3; phosphorylation at these sites facilitates the assembly of the pre-initiation complex. Post-translationally, specifically hydroxylated (with R stereochemistry) at C-3 of Arg-137 by KDM8. In terms of processing, mono-ADP-ribosylation at Glu-35 by PARP16 inhibits polysome assembly and mRNA loading, thereby inhibiting protein translation.

The protein localises to the cytoplasm. The protein resides in the nucleus. It is found in the nucleolus. Component of the 40S small ribosomal subunit. Plays an important role in controlling cell growth and proliferation through the selective translation of particular classes of mRNA. Part of the small subunit (SSU) processome, first precursor of the small eukaryotic ribosomal subunit. During the assembly of the SSU processome in the nucleolus, many ribosome biogenesis factors, an RNA chaperone and ribosomal proteins associate with the nascent pre-rRNA and work in concert to generate RNA folding, modifications, rearrangements and cleavage as well as targeted degradation of pre-ribosomal RNA by the RNA exosome. This chain is Small ribosomal subunit protein eS6 (RPS6), found in Bos taurus (Bovine).